The chain runs to 108 residues: Circadian clock oscillator protein KaiB (108 aa).

Belongs to the KaiB family. As to quaternary structure, may undergo a major conformational rearrangment; in the free state forms homooligomers. When bound to KaiC switches to a monomeric thioredoxin-fold (KaiB(fs)). The active oscillator complex is probably KaiC(6):KaiB(6).

Its function is as follows. Component of the KaiBC clock protein complex, which constitutes the main circadian regulator in cyanobacteria; it may modify the ATPase activity of KaiC. Functionally, may be a metamorphic protein which reversibly switches between an inactive tetrameric fold and a rare, thioredoxin-like monomeric fold (KaiB(fs)). KaiB(fs) binds phospho-KaiC, and perhaps clock output effectors. The polypeptide is Circadian clock oscillator protein KaiB (Prochlorococcus marinus (strain MIT 9515)).